The primary structure comprises 262 residues: Putative hydro-lyase Cbei_2760 (262 aa).

The protein belongs to the D-glutamate cyclase family.

This is Putative hydro-lyase Cbei_2760 from Clostridium beijerinckii (strain ATCC 51743 / NCIMB 8052) (Clostridium acetobutylicum).